We begin with the raw amino-acid sequence, 156 residues long: Crossover junction endodeoxyribonuclease RuvC (156 aa).

Residues Asp7, Glu67, and Asp139 contribute to the active site. Residues Asp7, Glu67, and Asp139 each coordinate Mg(2+).

Belongs to the RuvC family. As to quaternary structure, homodimer which binds Holliday junction (HJ) DNA. The HJ becomes 2-fold symmetrical on binding to RuvC with unstacked arms; it has a different conformation from HJ DNA in complex with RuvA. In the full resolvosome a probable DNA-RuvA(4)-RuvB(12)-RuvC(2) complex forms which resolves the HJ. Mg(2+) serves as cofactor.

The protein localises to the cytoplasm. It catalyses the reaction Endonucleolytic cleavage at a junction such as a reciprocal single-stranded crossover between two homologous DNA duplexes (Holliday junction).. Functionally, the RuvA-RuvB-RuvC complex processes Holliday junction (HJ) DNA during genetic recombination and DNA repair. Endonuclease that resolves HJ intermediates. Cleaves cruciform DNA by making single-stranded nicks across the HJ at symmetrical positions within the homologous arms, yielding a 5'-phosphate and a 3'-hydroxyl group; requires a central core of homology in the junction. The consensus cleavage sequence is 5'-(A/T)TT(C/G)-3'. Cleavage occurs on the 3'-side of the TT dinucleotide at the point of strand exchange. HJ branch migration catalyzed by RuvA-RuvB allows RuvC to scan DNA until it finds its consensus sequence, where it cleaves and resolves the cruciform DNA. The sequence is that of Crossover junction endodeoxyribonuclease RuvC from Sphingopyxis alaskensis (strain DSM 13593 / LMG 18877 / RB2256) (Sphingomonas alaskensis).